The chain runs to 153 residues: Peptidoglycan-associated lipoprotein (153 aa).

The first 19 residues, 1-19 (MNKFVKSLLVAGSVAALAA), serve as a signal peptide directing secretion. The N-palmitoyl cysteine moiety is linked to residue cysteine 20. A lipid anchor (S-diacylglycerol cysteine) is attached at cysteine 20. The OmpA-like domain occupies 40–153 (SVADLQQRYN…SKNRRAVLAY (114 aa)). 2 peptidoglycan binding regions span residues 55-56 (FD) and 97-101 (YNIAL).

Belongs to the Pal lipoprotein family. The Tol-Pal system is composed of five core proteins: the inner membrane proteins TolA, TolQ and TolR, the periplasmic protein TolB and the outer membrane protein Pal. They form a network linking the inner and outer membranes and the peptidoglycan layer.

The protein resides in the cell outer membrane. Functionally, part of the Tol-Pal system, which plays a role in outer membrane invagination during cell division and is important for maintaining outer membrane integrity. In Haemophilus influenzae (strain ATCC 51907 / DSM 11121 / KW20 / Rd), this protein is Peptidoglycan-associated lipoprotein.